Reading from the N-terminus, the 1934-residue chain is Pyruvate dehydrogenase [NADP(+)] (1934 aa).

4Fe-4S ferredoxin-type domains lie at 710–739 (SIPIVDMNKCTQCNYCSIVCPHAAIRPFLL) and 767–796 (YRIQVTPLDCTGCELCVHACPDDALHMEGL). Positions 719, 722, 725, 729, 776, 779, 782, and 786 each coordinate [4Fe-4S] cluster. One can recognise a Flavodoxin-like domain in the interval 1288-1438 (MHVLYGTETG…ELIEWLPDYL (151 aa)). The region spanning 1501 to 1759 (PNSVLLPVIE…NIKASAFNLP (259 aa)) is the FAD-binding FR-type domain. Residues 1542–1553 (YCLGDSLALYGQ) and 1685–1695 (IKSRSYSIASC) each bind FAD.

The protein in the N-terminal section; belongs to the pyruvate:ferredoxin/flavodoxin oxidoreductase family. In terms of assembly, homodimer. FAD serves as cofactor. The cofactor is FMN. Thiamine diphosphate is required as a cofactor.

It catalyses the reaction pyruvate + NADP(+) + CoA = acetyl-CoA + CO2 + NADPH. Functionally, may have an important role in respiratory metabolism. Cryptosporidium have a relic mitochondrion with no function in energy metabolism so it is not known if PFOR has a function. The sequence is that of Pyruvate dehydrogenase [NADP(+)] (PFOR) from Cryptosporidium parvum.